A 93-amino-acid polypeptide reads, in one-letter code: Uteroglobin (93 aa).

Positions 1 to 17 are cleaved as a signal peptide; it reads MKLAITIILVMLSVCYS.

Belongs to the secretoglobin family. Antiparallel homodimer; disulfide-linked. Interaction with LMBR1L is controversial.

Its subcellular location is the secreted. Functionally, binds phosphatidylcholine, phosphatidylinositol, polychlorinated biphenyls (PCB) and weakly progesterone, potent inhibitor of phospholipase A2. In Neotomodon alstoni (Mexican volcano mouse), this protein is Uteroglobin (SCGB1A1).